Here is a 238-residue protein sequence, read N- to C-terminus: MAVSSLSIRCGGFSPTISHKTEILCPNPSLKACCLLSSGGKADSSESTYQKGSGNNWKRRQALVGVGTLVATSIPATLLLAEEIPKSYSPFVDREDGYSYYYPSDWREFDFRAHDSAFKDRYLQLQNVRVRFIPTEKNDIHEVGPMEEVVYDLVKHKFAAPNQVATIYDMKERVEDGKNYYTFEYGLRTPIYATTSFATVAVGNNRYYTLIVGANERRWRKVKKQLQVVADSLKILQI.

It belongs to the PsbP family. In terms of assembly, part of the chloroplast NDH complex, composed of a mixture of chloroplast and nucleus encoded subunits. Component of the NDH lumenal subcomplex, at least composed of PnsL1, PnsL2, PnsL3, PnsL4 and PnsL5.

Its subcellular location is the plastid. It localises to the chloroplast thylakoid membrane. Its function is as follows. NDH shuttles electrons from NAD(P)H:plastoquinone, via FMN and iron-sulfur (Fe-S) centers, to quinones in the photosynthetic chain and possibly in a chloroplast respiratory chain. The immediate electron acceptor for the enzyme in this species is believed to be plastoquinone. Couples the redox reaction to proton translocation, and thus conserves the redox energy in a proton gradient. Required for accumulation of the chloroplast NAD(P)H dehydrogenase (NDH) complex. In Arabidopsis thaliana (Mouse-ear cress), this protein is Photosynthetic NDH subunit of lumenal location 1, chloroplastic.